A 312-amino-acid polypeptide reads, in one-letter code: Methionyl-tRNA formyltransferase (312 aa).

117-120 (SLLP) serves as a coordination point for (6S)-5,6,7,8-tetrahydrofolate.

Belongs to the Fmt family.

It carries out the reaction L-methionyl-tRNA(fMet) + (6R)-10-formyltetrahydrofolate = N-formyl-L-methionyl-tRNA(fMet) + (6S)-5,6,7,8-tetrahydrofolate + H(+). In terms of biological role, attaches a formyl group to the free amino group of methionyl-tRNA(fMet). The formyl group appears to play a dual role in the initiator identity of N-formylmethionyl-tRNA by promoting its recognition by IF2 and preventing the misappropriation of this tRNA by the elongation apparatus. The protein is Methionyl-tRNA formyltransferase of Bordetella pertussis (strain Tohama I / ATCC BAA-589 / NCTC 13251).